The primary structure comprises 302 residues: Putative S-adenosyl-L-methionine-dependent methyltransferase MRA_0290 (302 aa).

Residues Asp-126 and 155 to 156 each bind S-adenosyl-L-methionine; that span reads DL.

This sequence belongs to the UPF0677 family.

Its function is as follows. Exhibits S-adenosyl-L-methionine-dependent methyltransferase activity. The polypeptide is Putative S-adenosyl-L-methionine-dependent methyltransferase MRA_0290 (Mycobacterium tuberculosis (strain ATCC 25177 / H37Ra)).